Consider the following 608-residue polypeptide: Growth hormone receptor (608 aa).

Positions methionine 1–asparagine 16 are cleaved as a signal peptide. Topologically, residues aspartate 17–glutamate 237 are extracellular. Disulfide bonds link cysteine 34–cysteine 44 and cysteine 72–cysteine 83. Asparagine 86 is a glycosylation site (N-linked (GlcNAc...) asparagine). A disulfide bridge links cysteine 97 with cysteine 111. One can recognise a Fibronectin type-III domain in the interval proline 122–glycine 226. 3 N-linked (GlcNAc...) asparagine glycosylation sites follow: asparagine 127, asparagine 132, and asparagine 171. The WSXWS motif signature appears at phenylalanine 211–serine 215. The helical transmembrane segment at phenylalanine 238–serine 261 threads the bilayer. Topologically, residues lysine 262–proline 608 are cytoplasmic. A required for JAK2 binding region spans residues lysine 267–alanine 352. Positions isoleucine 270–lysine 278 match the Box 1 motif motif. The UbE motif motif lies at aspartate 313 to aspartate 322. 2 stretches are compositionally biased toward polar residues: residues alanine 413 to serine 426 and serine 438 to serine 451. Residues alanine 413–serine 451 form a disordered region.

It belongs to the type I cytokine receptor family. Type 1 subfamily. In terms of processing, on GH binding, proteolytically cleaved, in vitro, to produce GHBP. As to expression, broad specificity.

Its subcellular location is the cell membrane. It localises to the secreted. Receptor for pituitary gland growth hormone (GH1) involved in regulating postnatal body growth. On ligand binding, couples to the JAK2/STAT5 pathway. Functionally, the soluble form (GHBP) acts as a reservoir of growth hormone in plasma and may be a modulator/inhibitor of GH signaling. This Gallus gallus (Chicken) protein is Growth hormone receptor (GHR).